Consider the following 257-residue polypeptide: Zinc transporter ZupT (257 aa).

5 helical membrane passes run 5 to 25 (LILT…AVLG), 32 to 52 (VLAF…LMEM), 61 to 81 (GMSP…YFGL), 109 to 129 (AILL…ATFV), and 137 to 157 (LGMG…LAVA). The Fe(2+) site is built by Asn120 and Glu123. Glu123 and His148 together coordinate Zn(2+). The Fe(2+) site is built by Asn149, Glu152, and Glu181. Residue Glu152 participates in Zn(2+) binding. Transmembrane regions (helical) follow at residues 182 to 202 (ILGG…VVMA), 203 to 223 (AVMA…LMPL), and 236 to 256 (GVLC…TAGI).

Belongs to the ZIP transporter (TC 2.A.5) family. ZupT subfamily.

The protein resides in the cell inner membrane. It carries out the reaction Zn(2+)(in) = Zn(2+)(out). Functionally, mediates zinc uptake. May also transport other divalent cations. The sequence is that of Zinc transporter ZupT from Escherichia fergusonii (strain ATCC 35469 / DSM 13698 / CCUG 18766 / IAM 14443 / JCM 21226 / LMG 7866 / NBRC 102419 / NCTC 12128 / CDC 0568-73).